Consider the following 601-residue polypeptide: Methionine--tRNA ligase (601 aa).

Residues 21 to 31 carry the 'HIGH' region motif; that stretch reads PYANGPRHIGH. Zn(2+) is bound by residues Cys153, Cys156, Cys166, and Cys169. Asn361 serves as a coordination point for ATP.

The protein belongs to the class-I aminoacyl-tRNA synthetase family. MetG type 1 subfamily. Monomer. Zn(2+) is required as a cofactor.

The protein resides in the cytoplasm. The catalysed reaction is tRNA(Met) + L-methionine + ATP = L-methionyl-tRNA(Met) + AMP + diphosphate. Its function is as follows. Is required not only for elongation of protein synthesis but also for the initiation of all mRNA translation through initiator tRNA(fMet) aminoacylation. This is Methionine--tRNA ligase from Cutibacterium acnes (strain DSM 16379 / KPA171202) (Propionibacterium acnes).